The sequence spans 397 residues: uncharacterized protein (397 aa).

The tract at residues 368 to 391 is disordered; sequence TTKPGLHQPTQKRPTQTTSKPYIN. A compositionally biased stretch (polar residues) spans 375–388; that stretch reads QPTQKRPTQTTSKP.

This is an uncharacterized protein from Acanthamoeba polyphaga mimivirus (APMV).